The primary structure comprises 260 residues: ATP-dependent zinc metalloprotease FTSH, chloroplastic (260 aa).

Residue H219 participates in Zn(2+) binding. Residue E220 is part of the active site. H223 lines the Zn(2+) pocket.

In the N-terminal section; belongs to the AAA ATPase family. It in the C-terminal section; belongs to the peptidase M41 family. Zn(2+) serves as cofactor.

It localises to the plastid. Its subcellular location is the chloroplast thylakoid membrane. In terms of biological role, probable ATP-dependent zinc metallopeptidase. This Helianthus annuus (Common sunflower) protein is ATP-dependent zinc metalloprotease FTSH, chloroplastic.